A 460-amino-acid chain; its full sequence is Ribosomal protein uS12 methylthiotransferase RimO (460 aa).

The MTTase N-terminal domain maps to 16–130 (NKIHFISLGC…ILSAIESKEY (115 aa)). Cys25, Cys61, Cys93, Cys164, Cys168, and Cys171 together coordinate [4Fe-4S] cluster. Residues 150–382 (STPKHYAYLK…SQAQKQNVEK (233 aa)) form the Radical SAM core domain. Positions 385–455 (QKLVGQVVEA…GYDLIGRVVK (71 aa)) constitute a TRAM domain.

The protein belongs to the methylthiotransferase family. RimO subfamily. [4Fe-4S] cluster is required as a cofactor.

Its subcellular location is the cytoplasm. It carries out the reaction L-aspartate(89)-[ribosomal protein uS12]-hydrogen + (sulfur carrier)-SH + AH2 + 2 S-adenosyl-L-methionine = 3-methylsulfanyl-L-aspartate(89)-[ribosomal protein uS12]-hydrogen + (sulfur carrier)-H + 5'-deoxyadenosine + L-methionine + A + S-adenosyl-L-homocysteine + 2 H(+). Catalyzes the methylthiolation of an aspartic acid residue of ribosomal protein uS12. This chain is Ribosomal protein uS12 methylthiotransferase RimO, found in Chlamydia felis (strain Fe/C-56) (Chlamydophila felis).